A 161-amino-acid polypeptide reads, in one-letter code: Large ribosomal subunit protein uL15 (161 aa).

A disordered region spans residues 1-41 (MTKLNELAPAPGSTKGRMRVGRGPGSGKGKTAGRGVKGQKA). Residues 22–36 (RGPGSGKGKTAGRGV) show a composition bias toward gly residues.

This sequence belongs to the universal ribosomal protein uL15 family. In terms of assembly, part of the 50S ribosomal subunit.

Binds to the 23S rRNA. The protein is Large ribosomal subunit protein uL15 of Caulobacter sp. (strain K31).